We begin with the raw amino-acid sequence, 274 residues long: Large ribosomal subunit protein uL2 (274 aa).

The segment at 224–259 is disordered; that stretch reads AMNPVDHPHGGGEGRTSGGRHPVTPWGIPTKGYKTR.

It belongs to the universal ribosomal protein uL2 family. As to quaternary structure, part of the 50S ribosomal subunit. Forms a bridge to the 30S subunit in the 70S ribosome.

In terms of biological role, one of the primary rRNA binding proteins. Required for association of the 30S and 50S subunits to form the 70S ribosome, for tRNA binding and peptide bond formation. It has been suggested to have peptidyltransferase activity; this is somewhat controversial. Makes several contacts with the 16S rRNA in the 70S ribosome. The protein is Large ribosomal subunit protein uL2 of Citrifermentans bemidjiense (strain ATCC BAA-1014 / DSM 16622 / JCM 12645 / Bem) (Geobacter bemidjiensis).